The primary structure comprises 470 residues: Glutathione reductase (470 aa).

Ser-16 and Gly-17 together coordinate FAD. Ser-16 lines the glutathione pocket. Glutathione is bound at residue Arg-23. FAD-binding residues include Glu-36, Thr-43, Cys-44, and Lys-52. Cys-44 and Cys-49 are disulfide-bonded. Tyr-104 contacts glutathione. Position 120 (Ala-120) interacts with FAD. Residues Gly-190, Ile-193, Glu-196, Arg-213, and Arg-219 each coordinate NADP(+). A glutathione-binding site is contributed by Thr-228. Position 280 (Gly-280) interacts with NADP(+). Asp-321 lines the FAD pocket. Glu-327 contributes to the NADP(+) binding site. Thr-329 is an FAD binding site. Arg-337 serves as a coordination point for glutathione. Residue Ala-362 coordinates NADP(+). Residue Lys-412 coordinates glutathione. Residue His-459 coordinates FAD. The Proton acceptor role is filled by His-459.

The protein belongs to the class-I pyridine nucleotide-disulfide oxidoreductase family. As to quaternary structure, homodimer. The cofactor is FAD.

The protein localises to the cytoplasm. It is found in the mitochondrion. It catalyses the reaction 2 glutathione + NADP(+) = glutathione disulfide + NADPH + H(+). In terms of biological role, catalyzes the reduction of glutathione disulfide (GSSG) to reduced glutathione (GSH). Constitutes the major mechanism to maintain a high GSH:GSSG ratio in the cytosol. The protein is Glutathione reductase (GLR1) of Yarrowia lipolytica (strain CLIB 122 / E 150) (Yeast).